The following is a 435-amino-acid chain: Histidine--tRNA ligase (435 aa).

It belongs to the class-II aminoacyl-tRNA synthetase family. As to quaternary structure, homodimer.

The protein localises to the cytoplasm. It carries out the reaction tRNA(His) + L-histidine + ATP = L-histidyl-tRNA(His) + AMP + diphosphate + H(+). The sequence is that of Histidine--tRNA ligase from Synechococcus elongatus (strain ATCC 33912 / PCC 7942 / FACHB-805) (Anacystis nidulans R2).